The primary structure comprises 431 residues: Histidine--tRNA ligase (431 aa).

It belongs to the class-II aminoacyl-tRNA synthetase family. As to quaternary structure, homodimer.

Its subcellular location is the cytoplasm. The enzyme catalyses tRNA(His) + L-histidine + ATP = L-histidyl-tRNA(His) + AMP + diphosphate + H(+). This is Histidine--tRNA ligase (hisS) from Leifsonia xyli subsp. xyli (strain CTCB07).